The primary structure comprises 176 residues: Protein GrpE (176 aa).

The tract at residues 1-31 (MSEQKQEFENENAENSEHLQDENLQNIEDVE) is disordered.

This sequence belongs to the GrpE family. As to quaternary structure, homodimer.

Its subcellular location is the cytoplasm. Functionally, participates actively in the response to hyperosmotic and heat shock by preventing the aggregation of stress-denatured proteins, in association with DnaK and GrpE. It is the nucleotide exchange factor for DnaK and may function as a thermosensor. Unfolded proteins bind initially to DnaJ; upon interaction with the DnaJ-bound protein, DnaK hydrolyzes its bound ATP, resulting in the formation of a stable complex. GrpE releases ADP from DnaK; ATP binding to DnaK triggers the release of the substrate protein, thus completing the reaction cycle. Several rounds of ATP-dependent interactions between DnaJ, DnaK and GrpE are required for fully efficient folding. The protein is Protein GrpE of Campylobacter jejuni subsp. doylei (strain ATCC BAA-1458 / RM4099 / 269.97).